The sequence spans 417 residues: Serine hydroxymethyltransferase 2 (417 aa).

Residues leucine 121 and 125 to 127 (GHL) contribute to the (6S)-5,6,7,8-tetrahydrofolate site. Lysine 230 bears the N6-(pyridoxal phosphate)lysine mark. 355–357 (SPF) is a (6S)-5,6,7,8-tetrahydrofolate binding site.

It belongs to the SHMT family. Homodimer. The cofactor is pyridoxal 5'-phosphate.

The protein resides in the cytoplasm. The catalysed reaction is (6R)-5,10-methylene-5,6,7,8-tetrahydrofolate + glycine + H2O = (6S)-5,6,7,8-tetrahydrofolate + L-serine. It participates in one-carbon metabolism; tetrahydrofolate interconversion. The protein operates within amino-acid biosynthesis; glycine biosynthesis; glycine from L-serine: step 1/1. In terms of biological role, catalyzes the reversible interconversion of serine and glycine with tetrahydrofolate (THF) serving as the one-carbon carrier. This reaction serves as the major source of one-carbon groups required for the biosynthesis of purines, thymidylate, methionine, and other important biomolecules. Also exhibits THF-independent aldolase activity toward beta-hydroxyamino acids, producing glycine and aldehydes, via a retro-aldol mechanism. This Colwellia psychrerythraea (strain 34H / ATCC BAA-681) (Vibrio psychroerythus) protein is Serine hydroxymethyltransferase 2.